A 168-amino-acid chain; its full sequence is Ribosome maturation factor RimM (168 aa).

Positions 92–166 (EDTFYKADLI…RITVDPIEGM (75 aa)) constitute a PRC barrel domain.

Belongs to the RimM family. As to quaternary structure, binds ribosomal protein uS19.

The protein localises to the cytoplasm. In terms of biological role, an accessory protein needed during the final step in the assembly of 30S ribosomal subunit, possibly for assembly of the head region. Essential for efficient processing of 16S rRNA. May be needed both before and after RbfA during the maturation of 16S rRNA. It has affinity for free ribosomal 30S subunits but not for 70S ribosomes. The polypeptide is Ribosome maturation factor RimM (Alkaliphilus metalliredigens (strain QYMF)).